The sequence spans 283 residues: Elongation factor Ts (283 aa).

Residues 80–83 form an involved in Mg(2+) ion dislocation from EF-Tu region; it reads TDFV.

Belongs to the EF-Ts family.

The protein resides in the cytoplasm. In terms of biological role, associates with the EF-Tu.GDP complex and induces the exchange of GDP to GTP. It remains bound to the aminoacyl-tRNA.EF-Tu.GTP complex up to the GTP hydrolysis stage on the ribosome. This is Elongation factor Ts from Actinobacillus pleuropneumoniae serotype 3 (strain JL03).